The chain runs to 143 residues: Transcriptional regulator MraZ (143 aa).

SpoVT-AbrB domains are found at residues 5-47 (TYTP…PKEE) and 76-119 (TDEQ…DKQA).

It belongs to the MraZ family. Forms oligomers.

Its subcellular location is the cytoplasm. The protein localises to the nucleoid. The chain is Transcriptional regulator MraZ from Nocardia farcinica (strain IFM 10152).